A 360-amino-acid polypeptide reads, in one-letter code: NAD(P)H-quinone oxidoreductase subunit 1, chloroplastic (360 aa).

The next 9 helical transmembrane spans lie at 27 to 47 (IWIF…VLVI), 98 to 118 (FSIG…VIPF), 129 to 149 (IGIF…LMSG), 165 to 185 (AAQS…ISLL), 203 to 223 (FWGW…ISSL), 248 to 268 (YSGI…LISS), 269 to 289 (LFVT…ISIL), 297 to 317 (IFGT…FLFI), and 340 to 360 (FLLP…LFSL).

It belongs to the complex I subunit 1 family. As to quaternary structure, NDH is composed of at least 16 different subunits, 5 of which are encoded in the nucleus.

The protein resides in the plastid. Its subcellular location is the chloroplast thylakoid membrane. The catalysed reaction is a plastoquinone + NADH + (n+1) H(+)(in) = a plastoquinol + NAD(+) + n H(+)(out). The enzyme catalyses a plastoquinone + NADPH + (n+1) H(+)(in) = a plastoquinol + NADP(+) + n H(+)(out). Its function is as follows. NDH shuttles electrons from NAD(P)H:plastoquinone, via FMN and iron-sulfur (Fe-S) centers, to quinones in the photosynthetic chain and possibly in a chloroplast respiratory chain. The immediate electron acceptor for the enzyme in this species is believed to be plastoquinone. Couples the redox reaction to proton translocation, and thus conserves the redox energy in a proton gradient. This chain is NAD(P)H-quinone oxidoreductase subunit 1, chloroplastic, found in Barbarea verna (Land cress).